The following is a 188-amino-acid chain: Elongation factor P-like protein (188 aa).

This sequence belongs to the elongation factor P family.

This Xylella fastidiosa (strain M12) protein is Elongation factor P-like protein.